The chain runs to 102 residues: Small ribosomal subunit protein uS10 (102 aa).

It belongs to the universal ribosomal protein uS10 family. In terms of assembly, part of the 30S ribosomal subunit.

Its function is as follows. Involved in the binding of tRNA to the ribosomes. The polypeptide is Small ribosomal subunit protein uS10 (Levilactobacillus brevis (strain ATCC 367 / BCRC 12310 / CIP 105137 / JCM 1170 / LMG 11437 / NCIMB 947 / NCTC 947) (Lactobacillus brevis)).